A 171-amino-acid polypeptide reads, in one-letter code: RNA silencing suppressor p19 (171 aa).

Residues 1–15 are compositionally biased toward basic and acidic residues; it reads MERAIPGNDTREPAY. Residues 1 to 32 are disordered; it reads MERAIPGNDTREPAYGERWNGGPGGSTSPFQL.

This sequence belongs to the tombusvirus protein p19 family. Homodimer.

In terms of biological role, viral suppressor of RNA silencing which binds specifically to silencing RNAs (siRNAs). Acts as a molecular caliper to specifically select siRNAs based on the length of the duplex region of the RNA. This Capsicum annuum (Capsicum pepper) protein is RNA silencing suppressor p19.